Here is an 892-residue protein sequence, read N- to C-terminus: Transposase for transposon Tn4556 (892 aa).

Residues 1–12 are compositionally biased toward basic and acidic residues; it reads MGGRAGLDDGRG. The interval 1–63 is disordered; it reads MGGRAGLDDG…GQPARDAEHR (63 aa). Positions 23-34 are enriched in low complexity; sequence VAEGAAGAAAWG.

Belongs to the transposase 7 family.

Its function is as follows. Required for transposition of transposon Tn4556. In Streptomyces fradiae (Streptomyces roseoflavus), this protein is Transposase for transposon Tn4556 (tnpA).